The primary structure comprises 312 residues: Malate dehydrogenase (312 aa).

Residues 7 to 13 (GAAGGIG) and aspartate 34 each bind NAD(+). The substrate site is built by arginine 81 and arginine 87. NAD(+)-binding positions include asparagine 94 and 117 to 119 (ITN). Residues asparagine 119 and arginine 153 each contribute to the substrate site. The active-site Proton acceptor is the histidine 177. Position 227 (methionine 227) interacts with NAD(+).

The protein belongs to the LDH/MDH superfamily. MDH type 1 family. In terms of assembly, homodimer.

It catalyses the reaction (S)-malate + NAD(+) = oxaloacetate + NADH + H(+). Catalyzes the reversible oxidation of malate to oxaloacetate. The polypeptide is Malate dehydrogenase (Escherichia fergusonii (strain ATCC 35469 / DSM 13698 / CCUG 18766 / IAM 14443 / JCM 21226 / LMG 7866 / NBRC 102419 / NCTC 12128 / CDC 0568-73)).